We begin with the raw amino-acid sequence, 402 residues long: Selenoprotein P (402 aa).

Residues 1–19 (MWRGLGLALALCLLLTGGT) form the signal peptide. Residue Sec-59 is a non-standard amino acid, selenocysteine. Asn-83 and Asn-174 each carry an N-linked (GlcNAc...) asparagine glycan. The tract at residues 196–291 (KTAEASQRHH…VGSESLQPSL (96 aa)) is disordered. Basic residues predominate over residues 203–231 (RHHHPHPHSHPHPHPHPHPHPHPHPHHGH). 13 consecutive repeat copies span residues 204 to 205 (HH), 206 to 207 (HP), 208 to 209 (HP), 210 to 211 (HS), 212 to 213 (HP), 214 to 215 (HP), 216 to 217 (HP), 218 to 219 (HP), 220 to 221 (HP), 222 to 223 (HP), 224 to 225 (HP), 226 to 227 (HP), and 228 to 229 (HH). The tract at residues 204 to 229 (HHHPHPHSHPHPHPHPHPHPHPHPHH) is 13 X 2 AA tandem repeats of H-[PHS]. Positions 232–247 (QLHENAHLSESPKPDT) are enriched in basic and acidic residues. The segment covering 259 to 269 (LHHHHHRHKGP) has biased composition (basic residues). Phosphoserine is present on Ser-284. Residues Sec-297, Sec-307, Sec-338, Sec-350, Sec-363, Sec-365, Sec-372, Sec-388, Sec-390, Sec-397, and Sec-399 are each a non-standard amino acid (selenocysteine). The tract at residues 367-402 (LPPAAUQAAGQQLNPTEASTKUSUKNKAKMUKUPSN) is disordered.

It belongs to the selenoprotein P family. Post-translationally, phosphorylation sites are present in the extracellular medium. Brain and kidney. Most prominently expressed in the cerebellar cortex, hippocampus and olfactory bulb.

It is found in the secreted. In terms of biological role, constitutes a major selenium pool in the brain and may play an important role in developing and/or modulating the morphology of neurons and/or glial cells. The sequence is that of Selenoprotein P from Bos taurus (Bovine).